Consider the following 143-residue polypeptide: Ribosome maturation factor RimP (143 aa).

It belongs to the RimP family.

The protein localises to the cytoplasm. Functionally, required for maturation of 30S ribosomal subunits. The protein is Ribosome maturation factor RimP of Borrelia turicatae (strain 91E135).